Reading from the N-terminus, the 508-residue chain is Steroid 17-alpha-hydroxylase/17,20 lyase (508 aa).

A heme-binding site is contributed by Cys445.

It belongs to the cytochrome P450 family. Heme serves as cofactor.

The protein localises to the membrane. The enzyme catalyses a C21-steroid + reduced [NADPH--hemoprotein reductase] + O2 = a 17alpha-hydroxy-C21-steroid + oxidized [NADPH--hemoprotein reductase] + H2O + H(+). It carries out the reaction 17alpha-hydroxyprogesterone + reduced [NADPH--hemoprotein reductase] + O2 = androst-4-ene-3,17-dione + acetate + oxidized [NADPH--hemoprotein reductase] + H2O + 2 H(+). It catalyses the reaction 17alpha-hydroxypregnenolone + reduced [NADPH--hemoprotein reductase] + O2 = 3beta-hydroxyandrost-5-en-17-one + acetate + oxidized [NADPH--hemoprotein reductase] + H2O + 2 H(+). It participates in lipid metabolism; steroid biosynthesis. In terms of biological role, conversion of pregnenolone and progesterone to their 17-alpha-hydroxylated products and subsequently to dehydroepiandrosterone (DHEA) and androstenedione. Catalyzes both the 17-alpha-hydroxylation and the 17,20-lyase reaction. The polypeptide is Steroid 17-alpha-hydroxylase/17,20 lyase (CYP17A1) (Gallus gallus (Chicken)).